Here is a 399-residue protein sequence, read N- to C-terminus: Elongation factor Tu (399 aa).

Residues 10 to 209 (KPHVNIGTIG…AVDEYIPTPE (200 aa)) enclose the tr-type G domain. The tract at residues 19 to 26 (GHVDHGKT) is G1. 19-26 (GHVDHGKT) provides a ligand contact to GTP. Threonine 26 serves as a coordination point for Mg(2+). A G2 region spans residues 60–64 (GITIN). The interval 81-84 (DCPG) is G3. Residues 81–85 (DCPGH) and 136–139 (NKMD) each bind GTP. Positions 136 to 139 (NKMD) are G4. Residues 174 to 176 (SAL) form a G5 region.

This sequence belongs to the TRAFAC class translation factor GTPase superfamily. Classic translation factor GTPase family. EF-Tu/EF-1A subfamily. Monomer.

Its subcellular location is the cytoplasm. It catalyses the reaction GTP + H2O = GDP + phosphate + H(+). In terms of biological role, GTP hydrolase that promotes the GTP-dependent binding of aminoacyl-tRNA to the A-site of ribosomes during protein biosynthesis. The protein is Elongation factor Tu of Nautilia profundicola (strain ATCC BAA-1463 / DSM 18972 / AmH).